Reading from the N-terminus, the 936-residue chain is ABC transporter A family member 5 (936 aa).

7 consecutive transmembrane segments (helical) span residues 34 to 54, 340 to 360, 393 to 413, 422 to 442, 454 to 474, 484 to 501, and 527 to 547; these read LIVI…LFDT, ASLI…PVML, FLAI…AIGL, SIQF…AFLV, VAAY…FQFL, WIYI…RGLY, and AMEE…IAAY. One can recognise an ABC transporter domain in the interval 614-851; the sequence is IVCDNLKKVY…YGGSYVLTMT (238 aa). 652–659 is a binding site for ATP; sequence GPNGAGKT.

The protein belongs to the ABC transporter superfamily. ABCA family. CPR flippase (TC 3.A.1.211) subfamily.

It localises to the membrane. This is ABC transporter A family member 5 (ABCA5) from Arabidopsis thaliana (Mouse-ear cress).